Consider the following 166-residue polypeptide: Putative 4-hydroxy-4-methyl-2-oxoglutarate aldolase (166 aa).

Substrate is bound by residues 74-77 and Arg96; that span reads GDQI. Asp97 provides a ligand contact to a divalent metal cation.

Belongs to the class II aldolase/RraA-like family. Homotrimer. It depends on a divalent metal cation as a cofactor.

It carries out the reaction 4-hydroxy-4-methyl-2-oxoglutarate = 2 pyruvate. It catalyses the reaction oxaloacetate + H(+) = pyruvate + CO2. In terms of biological role, catalyzes the aldol cleavage of 4-hydroxy-4-methyl-2-oxoglutarate (HMG) into 2 molecules of pyruvate. Also contains a secondary oxaloacetate (OAA) decarboxylase activity due to the common pyruvate enolate transition state formed following C-C bond cleavage in the retro-aldol and decarboxylation reactions. This Xanthomonas campestris pv. campestris (strain 8004) protein is Putative 4-hydroxy-4-methyl-2-oxoglutarate aldolase.